The sequence spans 283 residues: MAGNFWQSSHYLQWILDKQDLLKERQKDLKFLSEEEYWKLQIFFTNVIQALGEHLKLRQQVIATATVYFKRFYARYSLKSIDPVLMAPTCVFLASKVEEFGVVSNTRLIAATTSVLKTRFSYAFPKEFPYRMNHILECEFYLLELMDCCLIVYHPYRPLLQYVQDMGQEDVLLPLAWRIVNDTYRTDLCLLYPPFMIALACLHVACVVQQKDARQWFAELSVDMEKILEIIRVILKLYEQWKNFDERKEMATILSKMPKPKPPPNSEGEQGPNGSQNSSYSQS.

The region spanning 20 to 151 is the Cyclin N-terminal domain; it reads DLLKERQKDL…LLELMDCCLI (132 aa). Residues 252–283 are disordered; that stretch reads TILSKMPKPKPPPNSEGEQGPNGSQNSSYSQS. Positions 272–283 are enriched in polar residues; it reads PNGSQNSSYSQS. Ser-275 carries the phosphoserine modification.

Belongs to the cyclin family. Cyclin C subfamily. In terms of assembly, component of the Mediator complex, which is composed of MED1, MED4, MED6, MED7, MED8, MED9, MED10, MED11, MED12, MED13, MED13L, MED14, MED15, MED16, MED17, MED18, MED19, MED20, MED21, MED22, MED23, MED24, MED25, MED26, MED27, MED29, MED30, MED31, CCNC, CDK8 and CDC2L6/CDK11. The MED12, MED13, CCNC and CDK8 subunits form a distinct module termed the CDK8 module. Mediator containing the CDK8 module is less active than Mediator lacking this module in supporting transcriptional activation. Individual preparations of the Mediator complex lacking one or more distinct subunits have been variously termed ARC, CRSP, DRIP, PC2, SMCC and TRAP. The cylin/CDK pair formed by CCNC/CDK8 also associates with the large subunit of RNA polymerase II.

The protein resides in the nucleus. In terms of biological role, component of the Mediator complex, a coactivator involved in regulated gene transcription of nearly all RNA polymerase II-dependent genes. Mediator functions as a bridge to convey information from gene-specific regulatory proteins to the basal RNA polymerase II transcription machinery. Mediator is recruited to promoters by direct interactions with regulatory proteins and serves as a scaffold for the assembly of a functional preinitiation complex with RNA polymerase II and the general transcription factors. Binds to and activates cyclin-dependent kinase CDK8 that phosphorylates the CTD (C-terminal domain) of the large subunit of RNA polymerase II (RNAp II), which may inhibit the formation of a transcription initiation complex. In Mus musculus (Mouse), this protein is Cyclin-C (Ccnc).